A 212-amino-acid polypeptide reads, in one-letter code: NAD(P)H-hydrate epimerase (212 aa).

One can recognise a YjeF N-terminal domain in the interval M11–D212. Residue N60 to D64 coordinates (6S)-NADPHX. Positions 61 and 123 each coordinate K(+). Residues G127–A133, Y138, and D156 contribute to the (6S)-NADPHX site. S159 contacts K(+).

It belongs to the NnrE/AIBP family. Requires K(+) as cofactor.

The enzyme catalyses (6R)-NADHX = (6S)-NADHX. The catalysed reaction is (6R)-NADPHX = (6S)-NADPHX. In terms of biological role, catalyzes the epimerization of the S- and R-forms of NAD(P)HX, a damaged form of NAD(P)H that is a result of enzymatic or heat-dependent hydration. This is a prerequisite for the S-specific NAD(P)H-hydrate dehydratase to allow the repair of both epimers of NAD(P)HX. The sequence is that of NAD(P)H-hydrate epimerase from Limosilactobacillus reuteri (strain DSM 20016) (Lactobacillus reuteri).